Here is a 121-residue protein sequence, read N- to C-terminus: Small ribosomal subunit protein uS13 (121 aa).

The disordered stretch occupies residues 92–121; sequence RKGLPMRGQRTRTNARTRKGPRRAAQALKK.

It belongs to the universal ribosomal protein uS13 family. In terms of assembly, part of the 30S ribosomal subunit. Forms a loose heterodimer with protein S19. Forms two bridges to the 50S subunit in the 70S ribosome.

In terms of biological role, located at the top of the head of the 30S subunit, it contacts several helices of the 16S rRNA. In the 70S ribosome it contacts the 23S rRNA (bridge B1a) and protein L5 of the 50S subunit (bridge B1b), connecting the 2 subunits; these bridges are implicated in subunit movement. Contacts the tRNAs in the A and P-sites. This chain is Small ribosomal subunit protein uS13, found in Burkholderia thailandensis (strain ATCC 700388 / DSM 13276 / CCUG 48851 / CIP 106301 / E264).